The chain runs to 369 residues: Protein VP6 (369 aa).

2 disordered regions span residues 17–169 (KREL…LQGR) and 184–208 (LDRIGGCSGNSKTEGEEAKAGGGDR). The span at 29–68 (LREKGSTEAKSKLKEDGEKKNKSEKEENKIHDDRRVESQK) shows a compositional bias: basic and acidic residues. The segment covering 92 to 111 (TGGGDGSAGARTGIGGGGVG) has biased composition (gly residues). Basic and acidic residues-rich tracts occupy residues 137–148 (TGADRVANDDAT) and 196–208 (TEGEEAKAGGGDR).

Belongs to the orbivirus VP6 family.

Its subcellular location is the virion. The polypeptide is Protein VP6 (Segment-9) (African horse sickness virus (AHSV)).